A 481-amino-acid polypeptide reads, in one-letter code: MNILRRGRLGSNVKEDVMKFTTSLEFDKEIFESDILCDIAHTTMLVEQNVISEENGKKIIAELKKIAEKGMETLDLDPSLDDIHMVIESELIKELGEDVAGRMHTGRSRNDEVATDLRLSLRKKVLEIITHLITMEKNMLAVSNEHKETLTVGYTHLQQAQPVTFGHQILSHISAIERDISRFFDTYNRINLSPLGCGAMATTGFNLNRKRTQELLGFYGLIENSMDGVSSRDFIVETMANISMLGTNLSKICEELVVFSSAEFNTIEIANEYTSTSSIMPQKKNPDVAEITRAKLSTLNGELVTVLTIMKALPNTYNRDLQEISPHLWKSVYTLIDSIQMVDGMISTVKVNKERMKENAEKNYSTATELADTLVRECGIAFRMAHGIVGELVKRSIEEKVEIKEIISEVLEKNNLSLSQEKIDTALDPFENVKLRNVIGGPAPEEVERAISSFNEKISAYKENLDEKIAEIESVKENLLK.

This sequence belongs to the lyase 1 family. Argininosuccinate lyase subfamily.

It localises to the cytoplasm. The catalysed reaction is 2-(N(omega)-L-arginino)succinate = fumarate + L-arginine. The protein operates within amino-acid biosynthesis; L-arginine biosynthesis; L-arginine from L-ornithine and carbamoyl phosphate: step 3/3. The sequence is that of Argininosuccinate lyase from Methanococcus maripaludis (strain C5 / ATCC BAA-1333).